Reading from the N-terminus, the 766-residue chain is Polyribonucleotide nucleotidyltransferase (766 aa).

Asp-490 and Asp-496 together coordinate Mg(2+). Residues 557–616 form the KH domain; it reads PKIDTITIPVDKIKVVIGKGGEQIDKIIAETGVKIDIDDEGLCSIFSSDQSAIDRAKEII. The S1 motif domain occupies 626–694; sequence GEVYEAKVVR…DKGRVDASMR (69 aa). Basic and acidic residues-rich tracts occupy residues 700-734 and 744-766; these read PEGY…DRNN and FELR…KKPE. A disordered region spans residues 700–766; that stretch reads PEGYVEPERK…FPELSTKKPE (67 aa).

It belongs to the polyribonucleotide nucleotidyltransferase family. Mg(2+) is required as a cofactor.

It localises to the cytoplasm. It carries out the reaction RNA(n+1) + phosphate = RNA(n) + a ribonucleoside 5'-diphosphate. Functionally, involved in mRNA degradation. Catalyzes the phosphorolysis of single-stranded polyribonucleotides processively in the 3'- to 5'-direction. The chain is Polyribonucleotide nucleotidyltransferase from Lactococcus lactis subsp. cremoris (strain MG1363).